The primary structure comprises 505 residues: ATP synthase subunit beta, mitochondrial (505 aa).

A mitochondrion-targeting transit peptide spans methionine 1 to lysine 31. Glycine 183 to threonine 190 serves as a coordination point for ATP.

This sequence belongs to the ATPase alpha/beta chains family. In terms of assembly, F-type ATPases have 2 components, CF(1) - the catalytic core - and CF(0) - the membrane proton channel. CF(1) has five subunits: alpha(3), beta(3), gamma(1), delta(1), epsilon(1). CF(0) has three main subunits: a, b and c.

It localises to the mitochondrion. The protein resides in the mitochondrion inner membrane. It carries out the reaction ATP + H2O + 4 H(+)(in) = ADP + phosphate + 5 H(+)(out). Functionally, mitochondrial membrane ATP synthase (F(1)F(0) ATP synthase or Complex V) produces ATP from ADP in the presence of a proton gradient across the membrane which is generated by electron transport complexes of the respiratory chain. F-type ATPases consist of two structural domains, F(1) - containing the extramembraneous catalytic core, and F(0) - containing the membrane proton channel, linked together by a central stalk and a peripheral stalk. During catalysis, ATP synthesis in the catalytic domain of F(1) is coupled via a rotary mechanism of the central stalk subunits to proton translocation. Subunits alpha and beta form the catalytic core in F(1). Rotation of the central stalk against the surrounding alpha(3)beta(3) subunits leads to hydrolysis of ATP in three separate catalytic sites on the beta subunits. The chain is ATP synthase subunit beta, mitochondrial from Drosophila melanogaster (Fruit fly).